Reading from the N-terminus, the 690-residue chain is Proprotein convertase subtilisin/kexin type 9 (690 aa).

The first 28 residues, 1–28, serve as a signal peptide directing secretion; the sequence is MGTVSSRRSWWPLPLLLLLLLGPAGARA. Residues 29 to 150 constitute a propeptide that is removed on maturation; the sequence is QEDEDGDYEE…IEEDSSVFAQ (122 aa). Residue tyrosine 36 is modified to Sulfotyrosine. Residue serine 45 is modified to Phosphoserine. In terms of domain architecture, Inhibitor I9 spans 75–147; it reads TYVVVLKEET…VDYIEEDSSV (73 aa). Positions 153 to 459 constitute a Peptidase S8 domain; the sequence is PWNLERITPP…GWQLFCRTVW (307 aa). Residues aspartate 184 and histidine 224 each act as charge relay system in the active site. Disulfide bonds link cysteine 221–cysteine 253 and cysteine 321–cysteine 356. The active-site Charge relay system is serine 384. Positions 448 to 690 are C-terminal domain; sequence GAGWQLFCRT…HLAQASQELQ (243 aa). 3 disulfide bridges follow: cysteine 455/cysteine 525, cysteine 475/cysteine 524, and cysteine 484/cysteine 507. An N-linked (GlcNAc...) asparagine glycan is attached at asparagine 531. Cystine bridges form between cysteine 532/cysteine 599, cysteine 550/cysteine 598, cysteine 560/cysteine 586, cysteine 606/cysteine 677, cysteine 624/cysteine 676, and cysteine 633/cysteine 652. Serine 686 is modified (phosphoserine).

The protein belongs to the peptidase S8 family. Monomer. Can self-associate to form dimers and higher multimers which may have increased LDLR degrading activity. The precursor protein but not the mature protein may form multimers. Interacts with APOB, VLDLR, LRP8/APOER2 and BACE1. The full-length immature form (pro-PCSK9) interacts with SCNN1A, SCNN1B and SCNN1G. The pro-PCSK9 form (via C-terminal domain) interacts with LDLR. Interacts (via the C-terminal domain) with ANXA2 (via repeat Annexin 1); the interaction inhibits the degradation of LDLR. The cofactor is Ca(2+). Post-translationally, cleavage by furin and PCSK5 generates a truncated inactive protein that is unable to induce LDLR degradation. In terms of processing, undergoes autocatalytic cleavage in the endoplasmic reticulum to release the propeptide from the N-terminus and the cleavage of the propeptide is strictly required for its maturation and activation. The cleaved propeptide however remains associated with the catalytic domain through non-covalent interactions, preventing potential substrates from accessing its active site. As a result, it is secreted from cells as a propeptide-containing, enzymatically inactive protein. Phosphorylation protects the propeptide against proteolysis.

It localises to the cytoplasm. Its subcellular location is the secreted. The protein resides in the endosome. It is found in the lysosome. The protein localises to the cell surface. It localises to the endoplasmic reticulum. Its subcellular location is the golgi apparatus. With respect to regulation, its proteolytic activity is autoinhibited by the non-covalent binding of the propeptide to the catalytic domain. Inhibited by EGTA. Crucial player in the regulation of plasma cholesterol homeostasis. Binds to low-density lipid receptor family members: low density lipoprotein receptor (LDLR), very low density lipoprotein receptor (VLDLR), apolipoprotein E receptor (LRP1/APOER) and apolipoprotein receptor 2 (LRP8/APOER2), and promotes their degradation in intracellular acidic compartments. Acts via a non-proteolytic mechanism to enhance the degradation of the hepatic LDLR through a clathrin LDLRAP1/ARH-mediated pathway. May prevent the recycling of LDLR from endosomes to the cell surface or direct it to lysosomes for degradation. Can induce ubiquitination of LDLR leading to its subsequent degradation. Inhibits intracellular degradation of APOB via the autophagosome/lysosome pathway in a LDLR-independent manner. Involved in the disposal of non-acetylated intermediates of BACE1 in the early secretory pathway. Inhibits epithelial Na(+) channel (ENaC)-mediated Na(+) absorption by reducing ENaC surface expression primarily by increasing its proteasomal degradation. Regulates neuronal apoptosis via modulation of LRP8/APOER2 levels and related anti-apoptotic signaling pathways. This chain is Proprotein convertase subtilisin/kexin type 9 (PCSK9), found in Pongo pygmaeus (Bornean orangutan).